The sequence spans 683 residues: Acetyl-coenzyme A synthetase 2 (683 aa).

CoA-binding positions include 206-209 (RGGK) and T325. Residues 401 to 403 (GEP) and 425 to 430 (DTMWQT) each bind ATP. An AMP-binding site is contributed by 425–430 (DTMWQT). Residue K506 forms a Glycyl lysine isopeptide (Lys-Gly) (interchain with G-Cter in ubiquitin) linkage. 2 residues coordinate ATP: D516 and R531. The AMP site is built by D516 and R531. CoA is bound at residue S539. ATP is bound at residue R542. Residue R612 coordinates CoA. S679 carries the phosphoserine modification.

It belongs to the ATP-dependent AMP-binding enzyme family.

The protein resides in the cytoplasm. Its subcellular location is the nucleus. It catalyses the reaction acetate + ATP + CoA = acetyl-CoA + AMP + diphosphate. It participates in carbohydrate metabolism; pyruvate metabolism. Catalyzes the production of acetyl-CoA. Provides the acetyl-CoA source for histone acetylation in the nucleus. 'Anaerobic' isozyme of acetyl-coenzyme A synthetase, which is required for growth on fermentable carbon sources such as glucose. May be involved in the PDH (pyruvate dehydrogenase complex) bypass. The chain is Acetyl-coenzyme A synthetase 2 from Saccharomyces cerevisiae (strain ATCC 204508 / S288c) (Baker's yeast).